We begin with the raw amino-acid sequence, 647 residues long: RalBP1-associated Eps domain-containing protein 2 (647 aa).

One can recognise an EH 1 domain in the interval 21–122 (EQQCYSELFA…RTESIKCELP (102 aa)). Residues 156–233 (EKNSFKRMDN…PSSEGPGAKP (78 aa)) form a disordered region. Positions 158 to 170 (NSFKRMDNEDKQE) are enriched in basic and acidic residues. Over residues 221 to 230 (PEGPSSEGPG) the composition is skewed to low complexity. Ser-239 is subject to Phosphoserine. The 92-residue stretch at 268 to 359 (QREYYVNQFR…LQPEYLQAAF (92 aa)) folds into the EH 2 domain. The 36-residue stretch at 301–336 (LSIPELSYIWELSDADCDGALTLSEFCAAFHLIVAR) folds into the EF-hand domain. Ca(2+) contacts are provided by Asp-314, Asp-316, Asp-318, and Glu-325. Residues 402 to 478 (PTQDVTTADD…PRPQKTHSRA (77 aa)) form a disordered region. Thr-466 is subject to Phosphothreonine. The residue at position 480 (Ser-480) is a Phosphoserine. The segment at 492–568 (PAANSGLLPP…PENQTTESQE (77 aa)) is disordered. The segment covering 499–510 (LPPPPALPPRPC) has biased composition (pro residues). Residues 501–647 (PPPALPPRPC…LEQLRPVTVL (147 aa)) form an interaction with RALBP1 region. Residues 524–539 (SQLNRAPSQAAESSPT) are compositionally biased toward polar residues. The interaction with ASAP1 stretch occupies residues 548–647 (PPSKPIRRKF…LEQLRPVTVL (100 aa)). Positions 599–640 (IQTAIRKNKEANAVLARLNSELQQQLKEVHQERIALENQLEQ) form a coiled coil.

In terms of assembly, interacts with EPN1. Interacts with EPS15 AND EPS15L1. Interacts with RALBP1; can form a ternary complex with activated Ral (RALA or RALB). Interacts with ASAP1; the interaction is direct and this complex can bind paxillin. Also forms a ternary complex with RALBP1 and ASAP1. Interacts with GRB2. Post-translationally, tyrosine-phosphorylated upon stimulation of cells with EGF. Phosphorylation on Tyr-residues induces its association with the EGF receptor probably indirectly through an adapter like GRB2.

The protein resides in the cytoplasm. Its function is as follows. Involved in ligand-dependent receptor mediated endocytosis of the EGF and insulin receptors as part of the Ral signaling pathway. By controlling growth factor receptors endocytosis may regulate cell survival. Through ASAP1 may regulate cell adhesion and migration. The protein is RalBP1-associated Eps domain-containing protein 2 (Reps2) of Mus musculus (Mouse).